An 825-amino-acid chain; its full sequence is PR domain zinc finger protein 1 (825 aa).

The SET domain occupies 84-201; it reads PRNLLFKYAT…ANQELLVWYC (118 aa). Positions 324–361 are enriched in low complexity; sequence ITRSPIPSSTTPSPSARSSPDQSLKSSSPHSSPGNTVS. Positions 324–369 are disordered; that stretch reads ITRSPIPSSTTPSPSARSSPDQSLKSSSPHSSPGNTVSPVGPGSQE. The tract at residues 527–574 is interaction with PIAS1; it reads HVVQPKATSAAMAAPSSDEAMNLIKNKRNMTGYKTLPYPLKKQNGKIK. 4 consecutive C2H2-type zinc fingers follow at residues 575-597, 603-625, 631-653, and 659-681; these read YECNVCAKTFGQLSNLKVHLRVH, FKCQTCNKGFTQLAHLQKHYLVH, HECQVCHKRFSSTSNLKTHLRLH, and YQCKVCPAKFTQFVHLKLHKRLH. K816 participates in a covalent cross-link: Glycyl lysine isopeptide (Lys-Gly) (interchain with G-Cter in SUMO1); alternate. K816 participates in a covalent cross-link: Glycyl lysine isopeptide (Lys-Gly) (interchain with G-Cter in SUMO2); alternate.

It belongs to the class V-like SAM-binding methyltransferase superfamily. Interacts with PRMT5. Interacts with FBXO10. Interacts with FBXO11. Interacts with multiple nuclear sumoylation E3 ligases, including CBX4, PIAS1, PIAS2, PIAS3, PIAS4, PML and RNF4, but not RANBP2. Interacts with LDB1, SMARCD3 and SMARCC1. Interacts with EEIG1; following TNFSF11/RANKL stimulation in bone marrow-derived macrophages, the interaction promotes the binding of PRDM1/BLIMP1 to the gene promoter of IRF8. In terms of processing, sumoylation at Lys-816 by PIAS1 augments transcriptional repressor activity, and is critical for plasma cell differentiation. Can be sumoylated with SUMO1 and SUMO2 by PML. Degradation of the wild-type protein mostly depends upon sumoylation, rather than ubiquitination. Desumoylated by SENP1 and SENP6. Ubiquitinated by the SCF(FBXO11) complex, leading to its degradation by the proteasome.

It is found in the nucleus. The protein localises to the cytoplasm. Its function is as follows. Transcription factor that mediates a transcriptional program in various innate and adaptive immune tissue-resident lymphocyte T cell types such as tissue-resident memory T (Trm), natural killer (trNK) and natural killer T (NKT) cells and negatively regulates gene expression of proteins that promote the egress of tissue-resident T-cell populations from non-lymphoid organs. Plays a role in the development, retention and long-term establishment of adaptive and innate tissue-resident lymphocyte T cell types in non-lymphoid organs, such as the skin and gut, but also in other nonbarrier tissues like liver and kidney, and therefore may provide immediate immunological protection against reactivating infections or viral reinfection. Binds specifically to the PRDI element in the promoter of the beta-interferon gene. Drives the maturation of B-lymphocytes into Ig secreting cells. Associates with the transcriptional repressor ZNF683 to chromatin at gene promoter regions. Binds to the promoter and acts as a transcriptional repressor of IRF8, thereby promotes transcription of osteoclast differentiation factors such as NFATC1 and EEIG1. In Homo sapiens (Human), this protein is PR domain zinc finger protein 1 (PRDM1).